Consider the following 288-residue polypeptide: S-methyl-5'-thioadenosine phosphorylase (288 aa).

Phosphate contacts are provided by residues S12, 54–55, and 87–88; these read RH and SA. M186 contributes to the substrate binding site. Residue T187 coordinates phosphate. 210–212 contributes to the substrate binding site; the sequence is DYD.

This sequence belongs to the PNP/MTAP phosphorylase family. MTAP subfamily. Homohexamer. Dimer of a homotrimer.

It carries out the reaction S-methyl-5'-thioadenosine + phosphate = 5-(methylsulfanyl)-alpha-D-ribose 1-phosphate + adenine. The protein operates within amino-acid biosynthesis; L-methionine biosynthesis via salvage pathway; S-methyl-5-thio-alpha-D-ribose 1-phosphate from S-methyl-5'-thioadenosine (phosphorylase route): step 1/1. In terms of biological role, catalyzes the reversible phosphorylation of S-methyl-5'-thioadenosine (MTA) to adenine and 5-methylthioribose-1-phosphate. Involved in the breakdown of MTA, a major by-product of polyamine biosynthesis. Responsible for the first step in the methionine salvage pathway after MTA has been generated from S-adenosylmethionine. Has broad substrate specificity with 6-aminopurine nucleosides as preferred substrates. The sequence is that of S-methyl-5'-thioadenosine phosphorylase from Chloroflexus aurantiacus (strain ATCC 29366 / DSM 635 / J-10-fl).